The following is a 255-amino-acid chain: Small ribosomal subunit protein uS2 (255 aa).

Residues 232 to 255 (ASGRDLGASEEVPVEPALEEASEA) are disordered.

The protein belongs to the universal ribosomal protein uS2 family.

This chain is Small ribosomal subunit protein uS2, found in Sinorhizobium medicae (strain WSM419) (Ensifer medicae).